We begin with the raw amino-acid sequence, 665 residues long: UvrABC system protein B (665 aa).

The region spanning 25–176 is the Helicase ATP-binding domain; it reads NSIEKGNRFQ…NQRQLLRDLV (152 aa). 38-45 contacts ATP; that stretch reads GATGTGKT. Positions 91-114 match the Beta-hairpin motif; the sequence is YYDYYQPEAYIPVSDTYIEKSASI. The Helicase C-terminal domain occupies 429 to 595; the sequence is QVDDLLGEIK…PIVTRSSNAI (167 aa). In terms of domain architecture, UVR spans 626–661; it reads PELIGQLEEQMKEAAKKLEFEEAAKYRDRIQHLRDK.

The protein belongs to the UvrB family. In terms of assembly, forms a heterotetramer with UvrA during the search for lesions. Interacts with UvrC in an incision complex.

The protein localises to the cytoplasm. In terms of biological role, the UvrABC repair system catalyzes the recognition and processing of DNA lesions. A damage recognition complex composed of 2 UvrA and 2 UvrB subunits scans DNA for abnormalities. Upon binding of the UvrA(2)B(2) complex to a putative damaged site, the DNA wraps around one UvrB monomer. DNA wrap is dependent on ATP binding by UvrB and probably causes local melting of the DNA helix, facilitating insertion of UvrB beta-hairpin between the DNA strands. Then UvrB probes one DNA strand for the presence of a lesion. If a lesion is found the UvrA subunits dissociate and the UvrB-DNA preincision complex is formed. This complex is subsequently bound by UvrC and the second UvrB is released. If no lesion is found, the DNA wraps around the other UvrB subunit that will check the other stand for damage. The sequence is that of UvrABC system protein B from Gloeothece citriformis (strain PCC 7424) (Cyanothece sp. (strain PCC 7424)).